Reading from the N-terminus, the 503-residue chain is Type II secretion system ATPase E (503 aa).

Positions 397, 400, 430, and 433 each coordinate Zn(2+).

Belongs to the GSP E family. Forms homooligomers; most probably hexamers. Interacts with EpsL/GspL. The cofactor is Zn(2+).

The protein localises to the cell inner membrane. It catalyses the reaction ATP + H2O + cellular proteinSide 1 = ADP + phosphate + cellular proteinSide 2.. Functionally, ATPase component of the type II secretion system required for the energy-dependent secretion of extracellular factors such as proteases and toxins from the periplasm. Acts as a molecular motor to provide the energy that is required for assembly of the pseudopilus and the extrusion of substrates generated in the cytoplasm. The sequence is that of Type II secretion system ATPase E (epsE) from Vibrio cholerae serotype O1 (strain ATCC 39315 / El Tor Inaba N16961).